A 466-amino-acid polypeptide reads, in one-letter code: Ribulose bisphosphate carboxylase large chain (466 aa).

The residue at position 5 (Lys-5) is an N6,N6,N6-trimethyllysine. 2 residues coordinate substrate: Asn-114 and Thr-164. Residue Lys-166 is the Proton acceptor of the active site. Residue Lys-168 coordinates substrate. The Mg(2+) site is built by Lys-192, Asp-194, and Glu-195. Lys-192 carries the N6-carboxylysine modification. Catalysis depends on His-285, which acts as the Proton acceptor. Substrate-binding residues include Arg-286, His-318, and Ser-370.

Belongs to the RuBisCO large chain family. Type I subfamily. Heterohexadecamer of 8 large chains and 8 small chains; disulfide-linked. The disulfide link is formed within the large subunit homodimers. Requires Mg(2+) as cofactor. The disulfide bond which can form in the large chain dimeric partners within the hexadecamer appears to be associated with oxidative stress and protein turnover.

It localises to the plastid. It is found in the chloroplast. The catalysed reaction is 2 (2R)-3-phosphoglycerate + 2 H(+) = D-ribulose 1,5-bisphosphate + CO2 + H2O. It catalyses the reaction D-ribulose 1,5-bisphosphate + O2 = 2-phosphoglycolate + (2R)-3-phosphoglycerate + 2 H(+). Functionally, ruBisCO catalyzes two reactions: the carboxylation of D-ribulose 1,5-bisphosphate, the primary event in carbon dioxide fixation, as well as the oxidative fragmentation of the pentose substrate in the photorespiration process. Both reactions occur simultaneously and in competition at the same active site. This chain is Ribulose bisphosphate carboxylase large chain, found in Coriaria myrtifolia (Tanner's sumac).